A 419-amino-acid chain; its full sequence is Histidine--tRNA ligase (419 aa).

It belongs to the class-II aminoacyl-tRNA synthetase family. As to quaternary structure, homodimer.

The protein resides in the cytoplasm. The catalysed reaction is tRNA(His) + L-histidine + ATP = L-histidyl-tRNA(His) + AMP + diphosphate + H(+). This Halothermothrix orenii (strain H 168 / OCM 544 / DSM 9562) protein is Histidine--tRNA ligase.